The chain runs to 335 residues: Glyceraldehyde-3-phosphate dehydrogenase 1 (335 aa).

NAD(+) is bound by residues 12–13 (RI), aspartate 34, arginine 78, and serine 120. D-glyceraldehyde 3-phosphate contacts are provided by residues 151–153 (SCT) and threonine 182. Catalysis depends on cysteine 152, which acts as the Nucleophile. Residue asparagine 183 participates in NAD(+) binding. D-glyceraldehyde 3-phosphate-binding positions include arginine 197, 210–211 (TG), and arginine 233. Asparagine 315 serves as a coordination point for NAD(+).

The protein belongs to the glyceraldehyde-3-phosphate dehydrogenase family. Homotetramer. Interacts with BrxC. In terms of processing, in response to oxidative stress, the active site Cys likely reacts with bacillithiol (BSH) to form mixed disulfides to protect the Cys residue against overoxidation. S-bacillithiolation presumably leads to loss of catalytic activity. Debacillithiolation by monothiol bacilliredoxin BrxC restores the activity.

It localises to the cytoplasm. It carries out the reaction D-glyceraldehyde 3-phosphate + phosphate + NAD(+) = (2R)-3-phospho-glyceroyl phosphate + NADH + H(+). The protein operates within carbohydrate degradation; glycolysis; pyruvate from D-glyceraldehyde 3-phosphate: step 1/5. Functionally, involved in the glycolysis. Catalyzes the oxidative phosphorylation of glyceraldehyde 3-phosphate (G3P) to 1,3-bisphosphoglycerate (BPG) using the cofactor NAD. The first reaction step involves the formation of a hemiacetal intermediate between G3P and a cysteine residue, and this hemiacetal intermediate is then oxidized to a thioester, with concomitant reduction of NAD to NADH. The reduced NADH is then exchanged with the second NAD, and the thioester is attacked by a nucleophilic inorganic phosphate to produce BPG. The chain is Glyceraldehyde-3-phosphate dehydrogenase 1 from Bacillus subtilis (strain 168).